Consider the following 248-residue polypeptide: Protein-lysine N-methyltransferase EFM5 (248 aa).

It belongs to the class I-like SAM-binding methyltransferase superfamily. EFM5 family.

It is found in the cytoplasm. Its function is as follows. S-adenosyl-L-methionine-dependent protein-lysine N-methyltransferase that trimethylates elongation factor 1-alpha (TEF1 and TEF2) at 'Lys-79'. Required for replication of Brome mosaic virus (BMV). This Saccharomyces cerevisiae (strain ATCC 204508 / S288c) (Baker's yeast) protein is Protein-lysine N-methyltransferase EFM5.